Reading from the N-terminus, the 185-residue chain is Ribosome-recycling factor (185 aa).

It belongs to the RRF family.

It is found in the cytoplasm. In terms of biological role, responsible for the release of ribosomes from messenger RNA at the termination of protein biosynthesis. May increase the efficiency of translation by recycling ribosomes from one round of translation to another. The chain is Ribosome-recycling factor from Buchnera aphidicola subsp. Acyrthosiphon pisum (strain Tuc7).